The sequence spans 149 residues: Transthyretin (149 aa).

Positions 1–20 (MAFHSLLLLCLAGLLFVSEA) are cleaved as a signal peptide. Position 32 is a sulfocysteine (cysteine 32). Residue lysine 37 participates in L-thyroxine binding. Residue glutamate 64 is modified to 4-carboxyglutamate. L-thyroxine contacts are provided by glutamate 76 and serine 139.

Belongs to the transthyretin family. As to quaternary structure, homotetramer. Dimer of dimers. In the homotetramer, subunits assemble around a central channel that can accommodate two ligand molecules. Interacts with RBP4. Sulfonation of the reactive cysteine Cys-32 enhances the stability of the native conformation of TTR, avoiding misassembly of the protein leading to amyloid formation. Detected in plasma (at protein level). Detected in liver.

The protein localises to the secreted. Thyroid hormone-binding protein. Probably transports thyroxine from the bloodstream to the brain. This chain is Transthyretin (TTR), found in Petaurus breviceps (Australian sugar glider).